Here is a 276-residue protein sequence, read N- to C-terminus: MEPQFKVKIDNDSARILKELAEKKRDEGLRVVFIGPPGSGKGTQAPLVKEDYCLCHLSTGDMLRAAIEQGTETGKQAKTIMDQGGLVPDEVMVNMIKENIQTPECKKGFILDGFPRTVPQAEKLDKMLAEDNKKIDHVLDFAIDDSLLVKRITGRLVHPSSGRSYHREFFPPKVDMIDDITGEPLIQRSDDNEEVLKKRLESFHKNTTPVLGYYQNKGILSTIDASKSAPFVSHTIKSIFLSTLHFPHNASIFKTFHQKMKMQVHSTETPLAAEIL.

ATP is bound at residue 38–43 (GSGKGT). An NMP region spans residues 58 to 87 (STGDMLRAAIEQGTETGKQAKTIMDQGGLV). AMP contacts are provided by residues threonine 59, arginine 64, 85–87 (GLV), 113–116 (GFPR), and glutamine 120. The interval 154–191 (GRLVHPSSGRSYHREFFPPKVDMIDDITGEPLIQRSDD) is LID. ATP contacts are provided by residues arginine 155 and 164-165 (SY). The AMP site is built by arginine 188 and arginine 199. Lysine 227 is a binding site for ATP.

It belongs to the adenylate kinase family. AK2 subfamily. In terms of assembly, monomer.

It localises to the cytoplasm. The protein localises to the cytosol. It is found in the mitochondrion intermembrane space. The catalysed reaction is AMP + ATP = 2 ADP. Catalyzes the reversible transfer of the terminal phosphate group between ATP and AMP. Plays an important role in cellular energy homeostasis and in adenine nucleotide metabolism. Adenylate kinase activity is critical for regulation of the phosphate utilization and the AMP de novo biosynthesis pathways. The polypeptide is Adenylate kinase (adkA) (Dictyostelium discoideum (Social amoeba)).